We begin with the raw amino-acid sequence, 505 residues long: Trans-cinnamate 4-monooxygenase (505 aa).

Residues 3–23 (LILLEKSLLAVFFAVIFSIIV) form a helical membrane-spanning segment. Residues 213–218 (RSRLAQ) and A306 each bind (E)-cinnamate. C447 contacts heme.

It belongs to the cytochrome P450 family. Heme serves as cofactor. Mostly expressed in stems, and, to a lower extent, in bulbs, roots, leaves and flowers.

The protein localises to the membrane. It catalyses the reaction (E)-cinnamate + reduced [NADPH--hemoprotein reductase] + O2 = (E)-4-coumarate + oxidized [NADPH--hemoprotein reductase] + H2O + H(+). It participates in alkaloid biosynthesis. Its pathway is phenylpropanoid metabolism; trans-4-coumarate biosynthesis; trans-4-coumarate from trans-cinnamate: step 1/1. Functionally, catalyzes the first oxidative step of the phenylpropanoid pathway in higher plants by transforming trans-cinnamate into p-coumarate. The compounds formed by this pathway are essential components for lignification, pollination, and defense against ultraviolet light, predators and pathogens. Trans-4-coumarate is a precursor to all amaryllidaceae alkaloids such as galanthamine, lycorine and haemanthamine, and including haemanthamine- and crinamine-type alkaloids, promising anticancer agents. The sequence is that of Trans-cinnamate 4-monooxygenase from Narcissus pseudonarcissus (Daffodil).